The following is a 712-amino-acid chain: Polyribonucleotide nucleotidyltransferase (712 aa).

Positions 487 and 493 each coordinate Mg(2+). A KH domain is found at 554 to 613 (PKIITMTINPDKIRDVIGPSGKQINKIIEETGVKIDIEQDGTVFISSINQEMNDKAKKII). The S1 motif domain occupies 623-691 (GEIYEGKVKR…KQGRVNLSRK (69 aa)).

Belongs to the polyribonucleotide nucleotidyltransferase family. Mg(2+) is required as a cofactor.

Its subcellular location is the cytoplasm. It catalyses the reaction RNA(n+1) + phosphate = RNA(n) + a ribonucleoside 5'-diphosphate. Functionally, involved in mRNA degradation. Catalyzes the phosphorolysis of single-stranded polyribonucleotides processively in the 3'- to 5'-direction. The sequence is that of Polyribonucleotide nucleotidyltransferase from Bacillus cereus (strain AH820).